The chain runs to 610 residues: Glutamine--fructose-6-phosphate aminotransferase [isomerizing] (610 aa).

The Nucleophile; for GATase activity role is filled by Cys-2. The 217-residue stretch at 2-218 (CGIVGAVAQR…EGDVAEITRH (217 aa)) folds into the Glutamine amidotransferase type-2 domain. SIS domains lie at 286–426 (AADI…LKGR) and 459–600 (LSED…VDQP). The For Fru-6P isomerization activity role is filled by Lys-605.

In terms of assembly, homodimer.

Its subcellular location is the cytoplasm. The enzyme catalyses D-fructose 6-phosphate + L-glutamine = D-glucosamine 6-phosphate + L-glutamate. Functionally, catalyzes the first step in hexosamine metabolism, converting fructose-6P into glucosamine-6P using glutamine as a nitrogen source. The chain is Glutamine--fructose-6-phosphate aminotransferase [isomerizing] from Haemophilus ducreyi (strain 35000HP / ATCC 700724).